A 94-amino-acid polypeptide reads, in one-letter code: Co-chaperonin GroES (94 aa).

The protein belongs to the GroES chaperonin family. Heptamer of 7 subunits arranged in a ring. Interacts with the chaperonin GroEL.

Its subcellular location is the cytoplasm. Its function is as follows. Together with the chaperonin GroEL, plays an essential role in assisting protein folding. The GroEL-GroES system forms a nano-cage that allows encapsulation of the non-native substrate proteins and provides a physical environment optimized to promote and accelerate protein folding. GroES binds to the apical surface of the GroEL ring, thereby capping the opening of the GroEL channel. In Limosilactobacillus reuteri (strain DSM 20016) (Lactobacillus reuteri), this protein is Co-chaperonin GroES.